Reading from the N-terminus, the 95-residue chain is Osteocalcin-related protein (95 aa).

The N-terminal stretch at 1–23 is a signal peptide; that stretch reads MRTLSLLTLLALAALCLSDLTDA. Positions 24–49 are excised as a propeptide; it reads TPTGPESDKAFMSKQEGNKVVNRLRR. One can recognise a Gla domain in the interval 46–92; the sequence is RLRRYLGASVPSPDPLEPTRELCELDPACDELSNQYGLKTAYRRIYG. Ca(2+) contacts are provided by Glu-62, Glu-66, Glu-69, and Asp-75. 4-carboxyglutamate is present on residues Glu-66 and Glu-69. A disulfide bridge connects residues Cys-68 and Cys-74.

It belongs to the osteocalcin/matrix Gla protein family. Post-translationally, gamma-carboxyglutamic acid residues are formed by vitamin K dependent carboxylation. These residues are essential for the binding of calcium. As to expression, expressed in kidney and lung, but not in bone.

Its subcellular location is the secreted. Binds strongly to apatite and calcium. This is Osteocalcin-related protein from Mus musculus (Mouse).